The primary structure comprises 190 residues: Shikimate kinase (190 aa).

G26–T31 is an ATP binding site. S30 contributes to the Mg(2+) binding site. Residues D48, R72, and G94 each contribute to the substrate site. R133 provides a ligand contact to ATP. Residue R152 participates in substrate binding.

The protein belongs to the shikimate kinase family. Monomer. It depends on Mg(2+) as a cofactor.

The protein localises to the cytoplasm. It catalyses the reaction shikimate + ATP = 3-phosphoshikimate + ADP + H(+). It participates in metabolic intermediate biosynthesis; chorismate biosynthesis; chorismate from D-erythrose 4-phosphate and phosphoenolpyruvate: step 5/7. Functionally, catalyzes the specific phosphorylation of the 3-hydroxyl group of shikimic acid using ATP as a cosubstrate. The chain is Shikimate kinase from Prochlorococcus marinus (strain SARG / CCMP1375 / SS120).